A 169-amino-acid polypeptide reads, in one-letter code: NADH-quinone oxidoreductase subunit B (169 aa).

Residues Cys42, Cys43, Cys107, and Cys136 each coordinate [4Fe-4S] cluster.

It belongs to the complex I 20 kDa subunit family. NDH-1 is composed of 14 different subunits. Subunits NuoB, C, D, E, F, and G constitute the peripheral sector of the complex. The cofactor is [4Fe-4S] cluster.

The protein localises to the cell inner membrane. It catalyses the reaction a quinone + NADH + 5 H(+)(in) = a quinol + NAD(+) + 4 H(+)(out). Functionally, NDH-1 shuttles electrons from NADH, via FMN and iron-sulfur (Fe-S) centers, to quinones in the respiratory chain. Couples the redox reaction to proton translocation (for every two electrons transferred, four hydrogen ions are translocated across the cytoplasmic membrane), and thus conserves the redox energy in a proton gradient. In Campylobacter hominis (strain ATCC BAA-381 / DSM 21671 / CCUG 45161 / LMG 19568 / NCTC 13146 / CH001A), this protein is NADH-quinone oxidoreductase subunit B.